The primary structure comprises 535 residues: CTP synthase (535 aa).

The segment at 1–267 (MTKFIFVTGG…DDIVIKRLDL (267 aa)) is amidoligase domain. A CTP-binding site is contributed by S13. S13 provides a ligand contact to UTP. 14–19 (SLGKGI) is a binding site for ATP. Y54 is a binding site for L-glutamine. D71 is a binding site for ATP. 2 residues coordinate Mg(2+): D71 and E141. CTP-binding positions include 148–150 (DIE), 188–193 (KTKPTQ), and K224. UTP-binding positions include 188-193 (KTKPTQ) and K224. Residue 240–242 (RDA) coordinates ATP. A Glutamine amidotransferase type-1 domain is found at 293–535 (TIGLVGKYVS…VEAAYKHQNK (243 aa)). G355 contributes to the L-glutamine binding site. C382 functions as the Nucleophile; for glutamine hydrolysis in the catalytic mechanism. L-glutamine-binding positions include 383–386 (LGMQ), E406, and R463. Active-site residues include H508 and E510.

It belongs to the CTP synthase family. In terms of assembly, homotetramer.

The enzyme catalyses UTP + L-glutamine + ATP + H2O = CTP + L-glutamate + ADP + phosphate + 2 H(+). It catalyses the reaction L-glutamine + H2O = L-glutamate + NH4(+). The catalysed reaction is UTP + NH4(+) + ATP = CTP + ADP + phosphate + 2 H(+). Its pathway is pyrimidine metabolism; CTP biosynthesis via de novo pathway; CTP from UDP: step 2/2. Allosterically activated by GTP, when glutamine is the substrate; GTP has no effect on the reaction when ammonia is the substrate. The allosteric effector GTP functions by stabilizing the protein conformation that binds the tetrahedral intermediate(s) formed during glutamine hydrolysis. Inhibited by the product CTP, via allosteric rather than competitive inhibition. Functionally, catalyzes the ATP-dependent amination of UTP to CTP with either L-glutamine or ammonia as the source of nitrogen. Regulates intracellular CTP levels through interactions with the four ribonucleotide triphosphates. The protein is CTP synthase of Staphylococcus haemolyticus (strain JCSC1435).